Reading from the N-terminus, the 611-residue chain is DNA mismatch repair protein MutL (611 aa).

Belongs to the DNA mismatch repair MutL/HexB family.

Its function is as follows. This protein is involved in the repair of mismatches in DNA. It is required for dam-dependent methyl-directed DNA mismatch repair. May act as a 'molecular matchmaker', a protein that promotes the formation of a stable complex between two or more DNA-binding proteins in an ATP-dependent manner without itself being part of a final effector complex. This is DNA mismatch repair protein MutL from Rickettsia bellii (strain RML369-C).